A 183-amino-acid chain; its full sequence is Adenine phosphoribosyltransferase (183 aa).

This sequence belongs to the purine/pyrimidine phosphoribosyltransferase family. Homodimer.

It localises to the cytoplasm. It catalyses the reaction AMP + diphosphate = 5-phospho-alpha-D-ribose 1-diphosphate + adenine. It functions in the pathway purine metabolism; AMP biosynthesis via salvage pathway; AMP from adenine: step 1/1. In terms of biological role, catalyzes a salvage reaction resulting in the formation of AMP, that is energically less costly than de novo synthesis. This is Adenine phosphoribosyltransferase from Escherichia coli (strain K12 / MC4100 / BW2952).